The following is an 849-amino-acid chain: Putative pentatricopeptide repeat-containing protein At5g08490 (849 aa).

PPR repeat units lie at residues 20 to 54 (DHRV…GHIA), 55 to 89 (CSEV…DPVV), 121 to 155 (SSVT…GLEK), 156 to 187 (DTLV…IADK), 188 to 222 (DVVS…PTEP), 223 to 260 (NYAT…SWLQ), 262 to 296 (HVFV…DLVS), 297 to 327 (WNVV…GDVS), 329 to 363 (DSVT…SYLL), 365 to 399 (DTSV…DIIS), 400 to 430 (WNAI…AITL), 431 to 465 (DSVT…GLLH), 469 to 499 (EPKL…LSER), 501 to 531 (TLVS…MSTT), 532 to 566 (DLTT…GMRP), 567 to 597 (NTVT…IIRG), 601 to 631 (DIRL…DARR), 632 to 666 (DLVM…NIKP), 667 to 702 (DHVF…GMKP), and 703 to 733 (TMEQ…MPVE). The interval 738 to 813 (IWGTLLRACT…PAGCSWLEVD (76 aa)) is type E motif. The interval 814 to 844 (GQRNVFVSGDCSHPRRDSIFDLVNALYLQMK) is type E(+) motif.

The protein belongs to the PPR family. PCMP-E subfamily.

The protein is Putative pentatricopeptide repeat-containing protein At5g08490 (PCMP-E32) of Arabidopsis thaliana (Mouse-ear cress).